The following is a 235-amino-acid chain: N-alpha-acetyltransferase 10 (235 aa).

Met-1 is subject to N-acetylmethionine. The tract at residues 1-58 (MNIRNARPEDLMNMQHCNLLCLPENYQMKYYFYHGLSWPQLSYIAEDENGKIVGYVLA) is interaction with NAA15. An N-acetyltransferase domain is found at 1–152 (MNIRNARPED…DAYAMKRDLT (152 aa)). At Lys-136 the chain carries N6-acetyllysine; by autocatalysis. Residues 196–213 (EEKGLAAEDSGGDSKDLS) are compositionally biased toward basic and acidic residues. The segment at 196–235 (EEKGLAAEDSGGDSKDLSEVSETTESTDVKDSSEASDSAS) is disordered. Ser-205 bears the Phosphoserine mark. Ser-209 carries the post-translational modification Phosphoserine; by IKKB. Phosphoserine occurs at positions 213 and 216.

This sequence belongs to the acetyltransferase family. ARD1 subfamily. Component of the N-terminal acetyltransferase A complex (also called the NatA complex) composed of NAA10 and NAA15. Interacts with NAA15. Component of the N-terminal acetyltransferase A (NatA)/HYPK complex at least composed of NAA10, NAA15 and HYPK, which has N-terminal acetyltransferase activity. In complex with NAA15, interacts with HYPK. Component of the N-terminal acetyltransferase E (NatE) complex at least composed of NAA10, NAA15 and NAA50. Within the complex interacts with NAA15; the interaction is required for binding to NAAT50. Interacts with NAAT50. The interaction of the NatA complex with NAA50 reduces the acetylation activity of the NatA complex. Component of the N-terminal acetyltransferase E (NatE)/HYPK complex at least composed of NAA10, NAA15, NAA50 and HYPK. In complex with NAA15, interacts with HYPK; the interaction with HYPK reduces the capacity of the NatA complex to interact with NAA50. Interacts with HIF1A (via its ODD domain); the interaction increases HIF1A protein stability during normoxia, an down-regulates it when induced by hypoxia. Interacts with the ribosome. Binds to MYLK. Interacts with NAA16. Interacts (via its C-terminal domain) with TSC2, leading to its acetylation. Interacts with IKBKB. Interacts with HSPA1A and HSPA1B leading to its acetylation. Cleaved by caspases during apoptosis. Post-translationally, phosphorylation by IKBKB/IKKB at Ser-209 destabilises NAA10 and promotes its proteasome-mediated degradation. In terms of processing, autoacetylated at Lys-136 which stimulates its catalytic activity. In terms of tissue distribution, ubiquitous.

It is found in the cytoplasm. The protein localises to the nucleus. The catalysed reaction is N-terminal glycyl-[protein] + acetyl-CoA = N-terminal N(alpha)-acetylglycyl-[protein] + CoA + H(+). It catalyses the reaction N-terminal L-alanyl-[protein] + acetyl-CoA = N-terminal N(alpha)-acetyl-L-alanyl-[protein] + CoA + H(+). The enzyme catalyses N-terminal L-seryl-[protein] + acetyl-CoA = N-terminal N(alpha)-acetyl-L-seryl-[protein] + CoA + H(+). It carries out the reaction N-terminal L-valyl-[protein] + acetyl-CoA = N-terminal N(alpha)-acetyl-L-valyl-[protein] + CoA + H(+). The catalysed reaction is N-terminal L-cysteinyl-[protein] + acetyl-CoA = N-terminal N(alpha)-acetyl-L-cysteinyl-[protein] + CoA + H(+). It catalyses the reaction N-terminal L-threonyl-[protein] + acetyl-CoA = N-terminal N(alpha)-acetyl-L-threonyl-[protein] + CoA + H(+). Its function is as follows. Catalytic subunit of the N-terminal acetyltransferase A (NatA) complex which displays alpha (N-terminal) acetyltransferase activity. Acetylates amino termini that are devoid of initiator methionine. The alpha (N-terminal) acetyltransferase activity may be important for vascular, hematopoietic and neuronal growth and development. Without NAA15, displays epsilon (internal) acetyltransferase activity towards HIF1A, thereby promoting its degradation. Represses MYLK kinase activity by acetylation, and thus represses tumor cell migration. Acetylates, and stabilizes TSC2, thereby repressing mTOR activity and suppressing cancer development. Acetylates HSPA1A and HSPA1B at 'Lys-77' which enhances its chaperone activity and leads to preferential binding to co-chaperone HOPX. Acetylates HIST1H4A. Acts as a negative regulator of sister chromatid cohesion during mitosis. This chain is N-alpha-acetyltransferase 10 (Naa10), found in Mus musculus (Mouse).